The sequence spans 67 residues: DNA-directed RNA polymerases I, II, and III subunit RPABC5 (67 aa).

Zn(2+) contacts are provided by Cys7, Cys10, Cys44, and Cys45.

This sequence belongs to the archaeal Rpo10/eukaryotic RPB10 RNA polymerase subunit family. In terms of assembly, component of the RNA polymerase I (Pol I), RNA polymerase II (Pol II) and RNA polymerase III (Pol III) complexes consisting of at least 13, 12 and 17 subunits, respectively. Pol I complex consists of a ten-subunit catalytic core composed of POLR1A/RPA1, POLR1B/RPA2, POLR1C/RPAC1, POLR1D/RPAC2, POLR1H/RPA12, POLR2E/RPABC1, POLR2F/RPABC2, POLR2H/RPABC3, POLR2K/RPABC4 and POLR2L/RPABC5; a mobile stalk subunit POLR1F/RPA43 protruding from the core and additional subunits homologous to general transcription factors POLR1E/RPA49 and POLR1G/RPA34. Part of Pol I pre-initiation complex (PIC), in which Pol I core assembles with RRN3 and promoter-bound UTBF and SL1/TIF-IB complex. Pol II complex contains a ten-subunit catalytic core composed of POLR2A/RPB1, POLR2B/RPB2, POLR2C/RPB3, POLR2I/RPB9, POLR2J/RPB11, POLR2E/RPABC1, POLR2F/RPABC2, POLR2H/RPABC3, POLR2K/RPABC4 and POLR2L/RPABC5 and a mobile stalk composed of two subunits POLR2D/RPB4 and POLR2G/RPB7. Part of Pol II(G) complex, in which Pol II core associates with an additional subunit POLR2M; unlike conventional Pol II, Pol II(G) functions as a transcriptional repressor. Part of TBP-based Pol II pre-initiation complex (PIC), in which Pol II core assembles with general transcription factors and other specific initiation factors including GTF2E1, GTF2E2, GTF2F1, GTF2F2, TCEA1, ERCC2, ERCC3, GTF2H2, GTF2H3, GTF2H4, GTF2H5, GTF2A1, GTF2A2, GTF2B and TBP; this large multi-subunit PIC complex mediates DNA unwinding and targets Pol II core to the transcription start site where the first phosphodiester bond forms. Pol III complex consists of a ten-subunit catalytic core composed of POLR3A/RPC1, POLR3B/RPC2, POLR1C/RPAC1, POLR1D/RPAC2, POLR3K/RPC10, POLR2E/RPABC1, POLR2F/RPABC2, POLR2H/RPABC3, POLR2K/RPABC4 and POLR2L/RPABC5; a mobile stalk composed of two subunits POLR3H/RPC8 and CRCP/RPC9, protruding from the core and functioning primarily in transcription initiation; and additional subunits homologous to general transcription factors of the RNA polymerase II machinery, POLR3C/RPC3-POLR3F/RPC6-POLR3G/RPC7 heterotrimer required for transcription initiation and POLR3D/RPC4-POLR3E/RPC5 heterodimer involved in both transcription initiation and termination.

The protein localises to the nucleus. Its subcellular location is the nucleolus. Functionally, DNA-dependent RNA polymerase catalyzes the transcription of DNA into RNA using the four ribonucleoside triphosphates as substrates. Common component of RNA polymerases I, II and III which synthesize ribosomal RNA precursors, mRNA precursors and many functional non-coding RNAs, and a small RNAs, such as 5S rRNA and tRNAs, respectively. This is DNA-directed RNA polymerases I, II, and III subunit RPABC5 (POLR2L) from Bos taurus (Bovine).